Reading from the N-terminus, the 556-residue chain is MSGDSERTVAPGVVPAPCASKVELRLSCRHLLDRDPLTKSDPSVVLLQQAQGQWLQVDRTEVVKSSLHPVFSKVFTMDYYFEEVQKLRFEVYDTHGPSGLSCQDDDFLGGMECTLGQIVAQKKMTRPLLLRFGRNAGKSTITVIAEDISGNNGYVELSFQARKLDDKDLFSKSDPFLELYRVNDDGSEQLVYRTEVVKNNLNPVWEPFKVSLNSLCSCEETRPLKCLVWDYDSRGKHDFIGDFTTTFAEMQKAFEEEQAQWDCVNAKYKQKKRNYKNSGVVILADLKLHRVHSFLDYIMGGCQIHCTVAIDFTASNGDPRNSCSLHHINPYQPNEYLRALVAVGEVCQDYDSDKRFSALGFGARIPPKYEVSHDFAINFNPEDDECEGIQGVVEAYQNCLPRVQLYGPTNVAPIISKVARMAAAEERTGEASQYYILLILTDGVVTDMSDTREAIVRASHLPMSVIIVGVGNADFTDMQILDGDDGILRSPRGEPALRDIVQFVPFRELKNASPAALAKCVLAEVPKQVVEYYSHKDLPPRSLGGQTGEAGPSSAP.

2 C2 domains span residues 1–128 and 135–262; these read MSGD…TRPL and NAGK…AQWD. Residues aspartate 168, aspartate 174, aspartate 230, aspartate 232, and aspartate 238 each contribute to the Ca(2+) site. The VWFA domain occupies 305–504; the sequence is HCTVAIDFTA…PALRDIVQFV (200 aa). The disordered stretch occupies residues 536–556; sequence KDLPPRSLGGQTGEAGPSSAP.

It belongs to the copine family. Ca(2+) serves as cofactor.

It is found in the cytoplasm. Its subcellular location is the nucleus. It localises to the cell membrane. Calcium-dependent phospholipid-binding protein that may play a role in calcium-mediated intracellular processes. The sequence is that of Copine-7 from Rattus norvegicus (Rat).